The sequence spans 172 residues: MLLPNILLTGTPGVGKTTLGKELASRSGLKYINVGDLAREGQLYDGYDEEYDCPILDEDRVVDELENQMSEGGVIVDYHGCDFFPERWFHIVFVLKTDNSILYKRLENRGYNEKKLKDNIQCEIFQVLHEEALASYKEEIVHQLPSNKPEDLEDNINQILKWIEHWVKDHSS.

Residues glycine 13, glycine 15, lysine 16, threonine 17, and threonine 18 each coordinate ATP. Positions 33-56 (NVGDLAREGQLYDGYDEEYDCPIL) are NMPbind. Residues 108–118 (NRGYNEKKLKD) are LID. ATP contacts are provided by arginine 109 and lysine 148.

It belongs to the adenylate kinase family. AK6 subfamily. In terms of assembly, monomer and homodimer. Interacts with small ribosomal subunit protein uS11. Not a structural component of 43S pre-ribosomes, but transiently interacts with them by binding to uS11. Interacts with COIL (via C-terminus).

It is found in the cytoplasm. It localises to the nucleus. The protein localises to the nucleoplasm. Its subcellular location is the cajal body. It catalyses the reaction AMP + ATP = 2 ADP. It carries out the reaction ATP + H2O = ADP + phosphate + H(+). Broad-specificity nucleoside monophosphate (NMP) kinase that catalyzes the reversible transfer of the terminal phosphate group between nucleoside triphosphates and monophosphates. Also has ATPase activity. Involved in the late cytoplasmic maturation steps of the 40S ribosomal particles, specifically 18S rRNA maturation. While NMP activity is not required for ribosome maturation, ATPase activity is. Associates transiently with small ribosomal subunit protein uS11. ATP hydrolysis breaks the interaction with uS11. May temporarily remove uS11 from the ribosome to enable a conformational change of the ribosomal RNA that is needed for the final maturation step of the small ribosomal subunit. Its NMP activity may have a role in nuclear energy homeostasis. May be involved in regulation of Cajal body (CB) formation. This chain is Adenylate kinase isoenzyme 6, found in Bos taurus (Bovine).